The following is a 293-amino-acid chain: Small ribosomal subunit biogenesis GTPase RsgA (293 aa).

The CP-type G domain occupies 63 to 223 (QNELVRPPIA…VADTPGFSAL (161 aa)). Residues 112–115 (SKID) and 166–174 (GQSGVGKSS) each bind GTP. 4 residues coordinate Zn(2+): Cys-247, Cys-252, His-254, and Cys-260.

Belongs to the TRAFAC class YlqF/YawG GTPase family. RsgA subfamily. In terms of assembly, monomer. Associates with 30S ribosomal subunit, binds 16S rRNA. It depends on Zn(2+) as a cofactor.

It localises to the cytoplasm. Functionally, one of several proteins that assist in the late maturation steps of the functional core of the 30S ribosomal subunit. Helps release RbfA from mature subunits. May play a role in the assembly of ribosomal proteins into the subunit. Circularly permuted GTPase that catalyzes slow GTP hydrolysis, GTPase activity is stimulated by the 30S ribosomal subunit. This Geobacillus kaustophilus (strain HTA426) protein is Small ribosomal subunit biogenesis GTPase RsgA.